We begin with the raw amino-acid sequence, 143 residues long: Large-conductance mechanosensitive channel (143 aa).

2 consecutive transmembrane segments (helical) span residues 10 to 30 (FAVK…GAFS) and 89 to 109 (GSFI…FLMV).

Belongs to the MscL family. In terms of assembly, homopentamer.

Its subcellular location is the cell inner membrane. Functionally, channel that opens in response to stretch forces in the membrane lipid bilayer. May participate in the regulation of osmotic pressure changes within the cell. The protein is Large-conductance mechanosensitive channel of Burkholderia ambifaria (strain ATCC BAA-244 / DSM 16087 / CCUG 44356 / LMG 19182 / AMMD) (Burkholderia cepacia (strain AMMD)).